Here is a 1042-residue protein sequence, read N- to C-terminus: Ribosome biogenesis protein NOC1 (1042 aa).

Disordered regions lie at residues 1-20, 28-79, 101-128, 148-214, 546-567, and 897-1020; these read MGLKRAARQQRDIGKPAFDE, GKID…AAKD, LVADVDSGNEGGGGPSQPKISSEQSLDQ, NRED…IPQD, LNGDKRDGGTPRKKSNPSGSLT, and GKMT…LKTL. Basic and acidic residues-rich tracts occupy residues 9 to 18 and 63 to 79; these read QQRDIGKPAF and HPTEAEEHRDSHAAAKD. Polar residues predominate over residues 118-128; the sequence is PKISSEQSLDQ. 2 stretches are compositionally biased toward acidic residues: residues 153-164 and 173-194; these read NTEDEASPDEDA and SDSDEGGGQEEMEKEDVDSFSD. Residues 195–207 are compositionally biased toward basic and acidic residues; the sequence is NEEKVTEKVDSGE. Over residues 902 to 911 the composition is skewed to basic and acidic residues; the sequence is KRDETKREFG. Positions 937–957 are enriched in acidic residues; the sequence is NVDDDSDADLGDFDYSDDEED. A compositionally biased stretch (low complexity) spans 962 to 972; that stretch reads DGSMSDIGMDS. The span at 978–994 shows a compositional bias: acidic residues; that stretch reads IFDDAGESDEQSSGEDE.

The protein belongs to the CBF/MAK21 family. In terms of assembly, interacts with NOC2. Forms a nucleolar complex with NOC2 that binds to 90S and 66S pre-ribosomes.

It is found in the nucleus. The protein resides in the nucleolus. Required for 60S ribosomal subunit synthesis. The protein is Ribosome biogenesis protein NOC1 (NOC1) of Chaetomium thermophilum (strain DSM 1495 / CBS 144.50 / IMI 039719) (Thermochaetoides thermophila).